A 714-amino-acid polypeptide reads, in one-letter code: RB-associated KRAB zinc finger protein (714 aa).

Residues 8–79 (VSFKDVAVDF…GGEFPCQHSP (72 aa)) form the KRAB domain. Glycyl lysine isopeptide (Lys-Gly) (interchain with G-Cter in SUMO2) cross-links involve residues Lys97 and Lys259. The segment at 171 to 260 (TYHGEKMCEF…YQRSQMEMKP (90 aa)) is required for interaction with RB1. 2 C2H2-type zinc fingers span residues 261 to 283 (FECS…QRAH) and 289 to 311 (YECN…RRSH). A Glycyl lysine isopeptide (Lys-Gly) (interchain with G-Cter in SUMO2) cross-link involves residue Lys315. 7 consecutive C2H2-type zinc fingers follow at residues 317 to 339 (YKCN…LRTH), 345 to 367 (YECS…QRNH), 373 to 395 (YPCN…QRTH), 401 to 423 (YKCN…QRTH), 429 to 451 (YQCS…YRSH), 457 to 479 (YECN…RKVH), and 485 to 505 (HECS…HTAH). Residue Lys357 forms a Glycyl lysine isopeptide (Lys-Gly) (interchain with G-Cter in SUMO2) linkage. Positions 417 to 714 (ITHQRTHTGE…NMNVLDVENL (298 aa)) are interaction with AR. The C2H2-type 10; degenerate zinc-finger motif lies at 511 to 533 (YECNECGKTFLVNSAFDGHQPLP). Residues Lys534 and Lys537 each participate in a glycyl lysine isopeptide (Lys-Gly) (interchain with G-Cter in SUMO2) cross-link. 6 consecutive C2H2-type zinc fingers follow at residues 539-561 (YECN…YRSH), 567-589 (YGCS…QRVH), 595-617 (YECY…HRIH), 623-645 (YECS…YRSH), 651-673 (YECN…YRTH), and 679-701 (YECN…QRIH).

The protein belongs to the krueppel C2H2-type zinc-finger protein family. In terms of assembly, interacts with AR and RB1. May also interact with other nuclear hormone receptors such as NR3C1/GR. In terms of tissue distribution, expressed in bone, brain, heart, kidney, liver, lung, pancreas and placenta.

The protein resides in the nucleus. May repress E2F-dependent transcription. May promote AR-dependent transcription. The polypeptide is RB-associated KRAB zinc finger protein (RBAK) (Homo sapiens (Human)).